The primary structure comprises 400 residues: NADH-quinone oxidoreductase subunit D (400 aa).

Belongs to the complex I 49 kDa subunit family. NDH-1 is composed of 14 different subunits. Subunits NuoB, C, D, E, F, and G constitute the peripheral sector of the complex.

Its subcellular location is the cell inner membrane. The catalysed reaction is a quinone + NADH + 5 H(+)(in) = a quinol + NAD(+) + 4 H(+)(out). NDH-1 shuttles electrons from NADH, via FMN and iron-sulfur (Fe-S) centers, to quinones in the respiratory chain. The immediate electron acceptor for the enzyme in this species is believed to be a menaquinone. Couples the redox reaction to proton translocation (for every two electrons transferred, four hydrogen ions are translocated across the cytoplasmic membrane), and thus conserves the redox energy in a proton gradient. The polypeptide is NADH-quinone oxidoreductase subunit D (Chlorobium chlorochromatii (strain CaD3)).